The following is a 267-amino-acid chain: Hydroxyethylthiazole kinase 2 (267 aa).

Residue Met41 participates in substrate binding. Residues Lys116 and Thr166 each coordinate ATP. Gly193 contacts substrate.

It belongs to the Thz kinase family. Requires Mg(2+) as cofactor.

The catalysed reaction is 5-(2-hydroxyethyl)-4-methylthiazole + ATP = 4-methyl-5-(2-phosphooxyethyl)-thiazole + ADP + H(+). It participates in cofactor biosynthesis; thiamine diphosphate biosynthesis; 4-methyl-5-(2-phosphoethyl)-thiazole from 5-(2-hydroxyethyl)-4-methylthiazole: step 1/1. In terms of biological role, catalyzes the phosphorylation of the hydroxyl group of 4-methyl-5-beta-hydroxyethylthiazole (THZ). The chain is Hydroxyethylthiazole kinase 2 from Streptococcus pneumoniae (strain 70585).